The primary structure comprises 472 residues: UDP-glycosyltransferase 100 (472 aa).

H15 acts as the Proton acceptor in catalysis. An an anthocyanidin-binding site is contributed by H15. D117 acts as the Charge relay in catalysis. The UDP-alpha-D-glucose site is built by A344, Q346, H361, W364, N365, S366, and E369. G384 is an an anthocyanidin binding site. Residues E385 and Q386 each coordinate UDP-alpha-D-glucose.

Belongs to the UDP-glycosyltransferase family.

The enzyme catalyses (20S)-protopanaxadiol + UDP-alpha-D-glucose = (20S)-ginsenoside C-K + UDP + H(+). It carries out the reaction (20S)-protopanaxatriol + UDP-alpha-D-glucose = (20S)-ginsenoside Rh1 + UDP + H(+). The catalysed reaction is (20S)-ginsenoside F1 + UDP-alpha-D-glucose = (20S)-ginsenoside Rg1 + UDP + H(+). Its pathway is secondary metabolite biosynthesis; terpenoid biosynthesis. Its function is as follows. Component of the dammarane-type triterpene saponins (e.g. PPT-type ginsenosides or panaxosides) biosynthetic pathway. Glycosyltransferase that catalyzes the biosynthesis of ginsenoside Rh1 from protopanaxatriol (PPT) and the conversion of ginsenoside F1 to ginsenoside Rg1. The chain is UDP-glycosyltransferase 100 from Panax ginseng (Korean ginseng).